We begin with the raw amino-acid sequence, 623 residues long: Transketolase (623 aa).

Methionine 1 bears the N-acetylmethionine mark. An N6-acetyllysine mark is found at lysine 6 and lysine 11. Histidine 37 is a substrate binding site. Residues serine 40 and histidine 77 each contribute to the thiamine diphosphate site. A Phosphoserine modification is found at serine 104. 123–125 contacts thiamine diphosphate; it reads GSL. Lysine 144 carries the N6-acetyllysine modification. Residue aspartate 155 participates in Mg(2+) binding. Residues glycine 156 and asparagine 185 each contribute to the thiamine diphosphate site. 2 residues coordinate Mg(2+): asparagine 185 and leucine 187. Lysine 204, lysine 232, and lysine 241 each carry N6-acetyllysine. Residues lysine 244 and histidine 258 each contribute to the thiamine diphosphate site. Residue histidine 258 coordinates substrate. At lysine 260 the chain carries N6-acetyllysine. The residue at position 275 (tyrosine 275) is a Phosphotyrosine. Threonine 287 carries the post-translational modification Phosphothreonine. Position 295 is a phosphoserine (serine 295). Positions 318 and 345 each coordinate substrate. Serine 345 carries the phosphoserine modification. A Glycyl lysine isopeptide (Lys-Gly) (interchain with G-Cter in SUMO2) cross-link involves residue lysine 352. Glutamate 366 acts as the Proton donor in catalysis. Position 392 (phenylalanine 392) interacts with thiamine diphosphate. Substrate-binding residues include histidine 416 and aspartate 424. Position 428 (glutamine 428) interacts with thiamine diphosphate. Residue arginine 474 coordinates substrate. 2 positions are modified to N6-acetyllysine: lysine 538 and lysine 603.

The protein belongs to the transketolase family. In terms of assembly, homodimer. Mg(2+) is required as a cofactor. The cofactor is Ca(2+). Requires Mn(2+) as cofactor. It depends on Co(2+) as a cofactor. Thiamine diphosphate serves as cofactor.

The catalysed reaction is D-sedoheptulose 7-phosphate + D-glyceraldehyde 3-phosphate = aldehydo-D-ribose 5-phosphate + D-xylulose 5-phosphate. Catalyzes the transfer of a two-carbon ketol group from a ketose donor to an aldose acceptor, via a covalent intermediate with the cofactor thiamine pyrophosphate. This Rattus norvegicus (Rat) protein is Transketolase (Tkt).